Reading from the N-terminus, the 1200-residue chain is uncharacterized protein (1200 aa).

Disordered regions lie at residues 282–302 (SQESRGESPSREAGTSSGCTS), 323–372 (LSEA…PQGS), 392–491 (SQEP…KASL), 510–568 (RAKS…RIGA), and 1056–1200 (SCPE…LASL). A compositionally biased stretch (low complexity) spans 420 to 435 (ASSPRLSPASPAAAAS). Residues 437 to 448 (TKIEVKTKERNG) show a composition bias toward basic and acidic residues. The segment covering 518–527 (GTTQTKTSGP) has biased composition (polar residues). Residues 1137–1153 (EDGKGSHKLPDPAREHL) are compositionally biased toward basic and acidic residues. Residues 1160–1171 (RQQPPRQSQVPR) are compositionally biased toward low complexity. Residues 1175-1200 (GSFSSEGTDSQTSLEDSPQTSPLASL) are compositionally biased toward polar residues.

This is an uncharacterized protein from Homo sapiens (Human).